Here is a 226-residue protein sequence, read N- to C-terminus: Protein Thf1 (226 aa).

A coiled-coil region spans residues 183–213; the sequence is EEKMQKDLDLYRSNLEKMDQLLTVIEEALQA.

This sequence belongs to the THF1 family.

Its function is as follows. May be involved in photosynthetic membrane biogenesis. In Gloeothece citriformis (strain PCC 7424) (Cyanothece sp. (strain PCC 7424)), this protein is Protein Thf1.